A 213-amino-acid polypeptide reads, in one-letter code: MGNRTDEDYNFVFKVVLIGESGVGKTNLLSRFTRNEFSHDSRTTIGVEFSTRTVMLGTAAVKAQIWDTAGLERYRAITSAYYRGAVGALLVFDLTKHQTYAVVERWLKELYDHAEATIVVMLVGNKSDLSQAREVPTEEACMFAENNGLLFLETSALDSTNVELAFQTVLKEIFAKVSKQKQNSTRTSAITLGNAQAGQDPGPGEKRACCISL.

GTP is bound by residues Ser21, Gly24, Lys25, Thr26, Asn27, Ser38, His39, Thr43, and Thr44. Thr26 provides a ligand contact to Mg(2+). 2 consecutive short sequence motifs (switch) follow at residues Asn35–Phe49 and Asp67–Gly84. Positions 44 and 67 each coordinate Mg(2+). 6 residues coordinate GTP: Gly70, Asn125, Lys126, Asp128, Ala156, and Leu157. S-geranylgeranyl cysteine attachment occurs at residues Cys209 and Cys210. Cys210 carries the cysteine methyl ester modification. Positions Ile211 to Leu213 are cleaved as a propeptide — removed in mature form.

This sequence belongs to the small GTPase superfamily. Rab family. Interacts (GTP-bound form) with RAB11FIP1, RAB11FIP2, RAB11FIP3 and RAB11FIP4. Interacts (via the hypervariable C-terminal region) with ITGB1 (via the cytoplasmic region); the interaction is GTP-dependent. Interacts with ITGAV. Associates with the integrin alpha-V/beta-1 heterodimer. Interacts with VPS33B. Mg(2+) serves as cofactor.

It localises to the cell membrane. Its subcellular location is the cell projection. The protein localises to the pseudopodium membrane. It is found in the cytoplasmic vesicle. The enzyme catalyses GTP + H2O = GDP + phosphate + H(+). With respect to regulation, regulated by guanine nucleotide exchange factors (GEFs) which promote the exchange of bound GDP for free GTP. Regulated by GTPase activating proteins (GAPs) which increase the GTP hydrolysis activity. Inhibited by GDP dissociation inhibitors (GDIs) which prevent Rab-GDP dissociation. In terms of biological role, the small GTPases Rab are key regulators of intracellular membrane trafficking, from the formation of transport vesicles to their fusion with membranes. Rabs cycle between an inactive GDP-bound form and an active GTP-bound form that is able to recruit to membranes different set of downstream effectors directly responsible for vesicle formation, movement, tethering and fusion. RAB25 regulates epithelial cell differentiation, proliferation and survival, thereby playing key roles in tumorigenesis. Promotes invasive migration of cells in which it functions to localize and maintain integrin alpha-V/beta-1 at the tips of extending pseudopodia. Involved in the regulation of epithelial morphogenesis through the control of CLDN4 expression and localization at tight junctions. May selectively regulate the apical recycling pathway. Together with MYO5B regulates transcytosis. The polypeptide is Ras-related protein Rab-25 (Mus musculus (Mouse)).